The following is a 364-amino-acid chain: Peptide chain release factor 1 (364 aa).

Glutamine 237 is subject to N5-methylglutamine.

The protein belongs to the prokaryotic/mitochondrial release factor family. Methylated by PrmC. Methylation increases the termination efficiency of RF1.

It is found in the cytoplasm. Functionally, peptide chain release factor 1 directs the termination of translation in response to the peptide chain termination codons UAG and UAA. The protein is Peptide chain release factor 1 of Mycoplasma mycoides subsp. mycoides SC (strain CCUG 32753 / NCTC 10114 / PG1).